Consider the following 534-residue polypeptide: Probable alpha-galactosidase A (534 aa).

A signal peptide spans 1–25; sequence MRLITRWIPLANALASTMPVQVVAS. Cys-47 and Cys-79 are disulfide-bonded. Asn-50, Asn-88, Asn-94, and Asn-124 each carry an N-linked (GlcNAc...) asparagine glycan. A disulfide bond links Cys-127 and Cys-157. Asp-155 (nucleophile) is an active-site residue. Asn-204 carries N-linked (GlcNAc...) asparagine glycosylation. The active-site Proton donor is Asp-213. A Ricin B-type lectin domain is found at 413-534; that stretch reads CSQVIPTGLI…GLPAGVHVAL (122 aa). Cysteines 430 and 443 form a disulfide. Asn-444 carries N-linked (GlcNAc...) asparagine glycosylation. An intrachain disulfide couples Cys-468 to Cys-481.

The protein belongs to the glycosyl hydrolase 27 family.

Its subcellular location is the secreted. It catalyses the reaction Hydrolysis of terminal, non-reducing alpha-D-galactose residues in alpha-D-galactosides, including galactose oligosaccharides, galactomannans and galactolipids.. Its function is as follows. Hydrolyzes a variety of simple alpha-D-galactoside as well as more complex molecules such as oligosaccharides and polysaccharides. The protein is Probable alpha-galactosidase A (aglA) of Aspergillus flavus (strain ATCC 200026 / FGSC A1120 / IAM 13836 / NRRL 3357 / JCM 12722 / SRRC 167).